We begin with the raw amino-acid sequence, 152 residues long: Acidic phospholipase A2 S17-58 (152 aa).

The N-terminal stretch at 1–19 (MYPAHLLVLLAVCVSLLGA) is a signal peptide. Positions 20-27 (SNIPLPSL) are excised as a propeptide. Intrachain disulfides connect Cys-38-Cys-104, Cys-54-Cys-151, Cys-56-Cys-72, Cys-71-Cys-132, Cys-78-Cys-125, Cys-88-Cys-118, and Cys-111-Cys-123. Ca(2+) is bound by residues Tyr-55, Gly-57, and Gly-59. His-75 is a catalytic residue. Ca(2+) is bound at residue Asp-76. The active site involves Asp-126.

It belongs to the phospholipase A2 family. Group I subfamily. D49 sub-subfamily. Requires Ca(2+) as cofactor. In terms of tissue distribution, expressed by the venom gland.

The protein localises to the secreted. The catalysed reaction is a 1,2-diacyl-sn-glycero-3-phosphocholine + H2O = a 1-acyl-sn-glycero-3-phosphocholine + a fatty acid + H(+). In terms of biological role, snake venom phospholipase A2 (PLA2) that inhibits collagen-induced platelet aggregation. PLA2 catalyzes the calcium-dependent hydrolysis of the 2-acyl groups in 3-sn-phosphoglycerides. The chain is Acidic phospholipase A2 S17-58 from Austrelaps superbus (Lowland copperhead snake).